The chain runs to 155 residues: Ribonuclease H (155 aa).

The RNase H type-1 domain occupies 5-146; that stretch reads DQKPVIIHTD…ADQLARDGLT (142 aa). Asp14, Glu52, Asp74, and Asp138 together coordinate Mg(2+). The tract at residues 133–155 is disordered; that stretch reads ENERADQLARDGLTENRMKSRVK.

The protein belongs to the RNase H family. Monomer. The cofactor is Mg(2+).

It localises to the cytoplasm. The catalysed reaction is Endonucleolytic cleavage to 5'-phosphomonoester.. In terms of biological role, endonuclease that specifically degrades the RNA of RNA-DNA hybrids. The polypeptide is Ribonuclease H (Rhodopseudomonas palustris (strain ATCC BAA-98 / CGA009)).